Reading from the N-terminus, the 325-residue chain is Interferon regulatory factor 1 (325 aa).

Residues 5-113 (RMRMRPWLEM…SAVRVYRMLP (109 aa)) constitute a DNA-binding region (IRF tryptophan pentad repeat). K78 carries the N6-acetyllysine modification. The disordered stretch occupies residues 92–165 (EEVKDQSRNK…TLPDDHSSYT (74 aa)). Residues 141 to 157 (GDSSPDTFSDGLSSSTL) show a composition bias toward polar residues. Residues K275 and K299 each participate in a glycyl lysine isopeptide (Lys-Gly) (interchain with G-Cter in SUMO) cross-link.

This sequence belongs to the IRF family. In terms of assembly, monomer. Homodimer. Interacts with EP300. Interacts with MYD88. Interacts with PIAS3. Interacts with SPOP. Post-translationally, phosphorylated by CK2 and this positively regulates its activity. In terms of processing, sumoylation represses the transcriptional activity and displays enhanced resistance to protein degradation. Sumoylated by UBE2I/UBC9 and SUMO1. Inactivates the tumor suppressor activity. Elevated levels in tumor cells. Major site is Lys-275. Sumoylation is enhanced by PIAS3. Desumoylated by SENP1 in tumor cells and appears to compete with ubiquitination on C-terminal sites. Ubiquitinated in a SPOP-depedent manner. Appears to compete with sumoylation on C-terminal sites.

The protein localises to the nucleus. Its subcellular location is the cytoplasm. Its activity is regulated as follows. Activated by MYD88. Functionally, transcriptional regulator which displays a remarkable functional diversity in the regulation of cellular responses. Regulates transcription of IFN and IFN-inducible genes, host response to viral and bacterial infections, regulation of many genes expressed during hematopoiesis, inflammation, immune responses and cell proliferation and differentiation, regulation of the cell cycle and induction of growth arrest and programmed cell death following DNA damage. Stimulates both innate and acquired immune responses through the activation of specific target genes and can act as a transcriptional activator and repressor regulating target genes by binding to an interferon-stimulated response element (ISRE) in their promoters. Has an essentail role in IFNG-dependent immunity to mycobacteria. Competes with the transcriptional repressor ZBED2 for binding to a common consensus sequence in gene promoters. Its target genes for transcriptional activation activity include: genes involved in anti-viral response, such as IFN-alpha/beta, RIGI, TNFSF10/TRAIL, ZBP1, OAS1/2, PIAS1/GBP, EIF2AK2/PKR and RSAD2/viperin; antibacterial response, such as GBP2, GBP5 and NOS2/INOS; anti-proliferative response, such as p53/TP53, LOX and CDKN1A; apoptosis, such as BBC3/PUMA, CASP1, CASP7 and CASP8; immune response, such as IL7, IL12A/B and IL15, PTGS2/COX2 and CYBB; DNA damage responses and DNA repair, such as POLQ/POLH; MHC class I expression, such as TAP1, PSMB9/LMP2, PSME1/PA28A, PSME2/PA28B and B2M and MHC class II expression, such as CIITA; metabolic enzymes, such as ACOD1/IRG1. Represses genes involved in anti-proliferative response, such as BIRC5/survivin, CCNB1, CCNE1, CDK1, CDK2 and CDK4 and in immune response, such as FOXP3, IL4, ANXA2 and TLR4. Stimulates p53/TP53-dependent transcription through enhanced recruitment of EP300 leading to increased acetylation of p53/TP53. Plays an important role in immune response directly affecting NK maturation and activity, macrophage production of IL12, Th1 development and maturation of CD8+ T-cells. Also implicated in the differentiation and maturation of dendritic cells and in the suppression of regulatory T (Treg) cells development. Acts as a tumor suppressor and plays a role not only in antagonism of tumor cell growth but also in stimulating an immune response against tumor cells. The polypeptide is Interferon regulatory factor 1 (IRF1) (Homo sapiens (Human)).